We begin with the raw amino-acid sequence, 116 residues long: Host cell factor C1 regulator 1 (116 aa).

The interval 1 to 22 is disordered; that stretch reads MILQQPLERGPPGRDPRATTGV. The tract at residues 54 to 57 is interaction with HCFC1; it reads DHPY. The Nuclear export signal signature appears at 88 to 97; the sequence is IPEALRLLRL.

In terms of assembly, interacts with HCFC1.

The protein localises to the cytoplasm. It localises to the nucleus. Functionally, regulates HCFC1 activity by modulating its subcellular localization. Overexpression of HCFC1R1 leads to accumulation of HCFC1 in the cytoplasm. HCFC1R1-mediated export may provide the pool of cytoplasmic HCFC1 required for import of virion-derived VP16 into the nucleus. The sequence is that of Host cell factor C1 regulator 1 (Hcfc1r1) from Rattus norvegicus (Rat).